The primary structure comprises 757 residues: Cellulose synthase-like protein B2 (757 aa).

2 helical membrane-spanning segments follow: residues Ala-24–Met-44 and Gly-48–Ser-68. Active-site residues include Asp-136 and Asp-461. 6 helical membrane passes run Ala-533–Tyr-555, Leu-568–Phe-588, Ile-607–Leu-627, Phe-672–Gly-692, Gly-704–Leu-724, and Ile-735–Val-755.

It belongs to the glycosyltransferase 2 family. Plant cellulose synthase-like B subfamily. In terms of tissue distribution, expressed in young seedlings, primarily in the root vascular tissue.

It is found in the golgi apparatus membrane. In terms of biological role, thought to be a Golgi-localized beta-glycan synthase that polymerize the backbones of noncellulosic polysaccharides (hemicelluloses) of plant cell wall. The polypeptide is Cellulose synthase-like protein B2 (CSLB2) (Arabidopsis thaliana (Mouse-ear cress)).